The following is a 575-amino-acid chain: Phosphoenolpyruvate-protein phosphotransferase (575 aa).

Tyrosine 122 bears the Phosphotyrosine mark. Catalysis depends on histidine 189, which acts as the Tele-phosphohistidine intermediate. Phosphoenolpyruvate is bound by residues arginine 296 and arginine 332. Residues glutamate 431 and aspartate 455 each contribute to the Mg(2+) site. Residues 454-455 and arginine 465 contribute to the phosphoenolpyruvate site; that span reads ND. Cysteine 502 serves as the catalytic Proton donor.

It belongs to the PEP-utilizing enzyme family. In terms of assembly, homodimer. Interacts with the pole-localizer protein TmaR. Binding to TmaR is reversible as long as TmaR can get phosphorylated, whereas binding to non-phosphorylated TmaR is very strong and shifts the equilibrium toward binding. The cofactor is Mg(2+). Post-translationally, phosphorylated on Tyr-122. Phosphorylation on Tyr-122 is important for polar localization but not for interaction with TmaR and for activity.

Its subcellular location is the cytoplasm. It carries out the reaction L-histidyl-[protein] + phosphoenolpyruvate = N(pros)-phospho-L-histidyl-[protein] + pyruvate. With respect to regulation, inhibited by oxalate. Its function is as follows. General (non sugar-specific) component of the phosphoenolpyruvate-dependent sugar phosphotransferase system (sugar PTS). This major carbohydrate active-transport system catalyzes the phosphorylation of incoming sugar substrates concomitantly with their translocation across the cell membrane. Enzyme I transfers the phosphoryl group from phosphoenolpyruvate (PEP) to the phosphoryl carrier protein (HPr). Can also use (Z)-3-fluoro-PEP (ZFPEP), (Z)-3-methyl-PEP (ZMePEP), (Z)-3-chloro-PEP (ZClPEP) and (E)-3-chloro-PEP (EClPEP) as alternative phosphoryl donors. The protein is Phosphoenolpyruvate-protein phosphotransferase of Escherichia coli (strain K12).